A 352-amino-acid chain; its full sequence is Molybdenum import ATP-binding protein ModC (352 aa).

Positions Met-2–Gly-230 constitute an ABC transporter domain. Gly-32–Ser-39 serves as a coordination point for ATP. The 63-residue stretch at Lys-290–Met-352 folds into the Mop domain.

It belongs to the ABC transporter superfamily. Molybdate importer (TC 3.A.1.8) family. The complex is composed of two ATP-binding proteins (ModC), two transmembrane proteins (ModB) and a solute-binding protein (ModA).

The protein resides in the cell inner membrane. It catalyses the reaction molybdate(out) + ATP + H2O = molybdate(in) + ADP + phosphate + H(+). Functionally, part of the ABC transporter complex ModABC involved in molybdenum import. Responsible for energy coupling to the transport system. This is Molybdenum import ATP-binding protein ModC from Mannheimia succiniciproducens (strain KCTC 0769BP / MBEL55E).